The following is a 291-amino-acid chain: Ubiquinone biosynthesis protein COQ4, mitochondrial (291 aa).

A mitochondrion-targeting transit peptide spans 1 to 37 (MLGRRSVSLLRGLTELPVSSRAHTALRALSVPQTRRN). Zn(2+)-binding residues include histidine 169, aspartate 170, histidine 173, and glutamate 185. Basic and acidic residues predominate over residues 271 to 283 (PLNEAKEAAERRS). Residues 271–291 (PLNEAKEAAERRSKTTQNQIY) form a disordered region.

The protein belongs to the COQ4 family. As to quaternary structure, component of a multi-subunit COQ enzyme complex, composed of at least COQ3, COQ4, COQ5, COQ6, COQ7 and COQ9. Zn(2+) is required as a cofactor.

The protein localises to the mitochondrion inner membrane. It carries out the reaction a 4-hydroxy-3-methoxy-5-(all-trans-polyprenyl)benzoate + H(+) = a 2-methoxy-6-(all-trans-polyprenyl)phenol + CO2. It participates in cofactor biosynthesis; ubiquinone biosynthesis. Functionally, lyase that catalyzes the C1-decarboxylation of 4-hydroxy-3-methoxy-5-(all-trans-polyprenyl)benzoic acid into 2-methoxy-6-(all-trans-polyprenyl)phenol during ubiquinone biosynthesis. The sequence is that of Ubiquinone biosynthesis protein COQ4, mitochondrial from Coprinopsis cinerea (strain Okayama-7 / 130 / ATCC MYA-4618 / FGSC 9003) (Inky cap fungus).